The primary structure comprises 1153 residues: Integrin alpha-M (1153 aa).

The first 16 residues, 1–16 (MTLKALLVTALALCHG), serve as a signal peptide directing secretion. The Extracellular portion of the chain corresponds to 17–1105 (FNLDTEHPMT…TKVEPYEVHN (1089 aa)). FG-GAP repeat units follow at residues 18–75 (NLDT…RCHP) and 76–135 (IPLQ…RPPQ). Asn58 carries an N-linked (GlcNAc...) asparagine glycan. Cysteines 66 and 73 form a disulfide. Asn86 is a glycosylation site (N-linked (GlcNAc...) asparagine). Cys105 and Cys123 are oxidised to a cystine. The 175-residue stretch at 164–338 (IDFQKMKEFV…QEKIFAIEGT (175 aa)) folds into the VWFA domain. 5 FG-GAP repeats span residues 339–390 (QTGS…VTFI), 391–442 (NTTR…FGTW), 443–503 (EPHT…RARW), 506–564 (EALL…ASLS), and 569–629 (HRII…FSPK). An N-linked (GlcNAc...) asparagine glycan is attached at Asn391. Ca(2+)-binding residues include Asp465, Asp467, Asp469, Asn471, Asn473, Asp529, Asn531, Asp533, Asp537, Asp592, Asp596, and Asp600. An intrachain disulfide couples Cys654 to Cys711. Residues Asn696, Asn734, Asn772, Asn801, Asn881, Asn907, Asn941, Asn980, Asn994, and Asn1022 are each glycosylated (N-linked (GlcNAc...) asparagine). Cys770 and Cys776 are oxidised to a cystine. Intrachain disulfides connect Cys999–Cys1023 and Cys1028–Cys1033. Residues Asn1045, Asn1051, and Asn1076 are each glycosylated (N-linked (GlcNAc...) asparagine). Residues 1106–1129 (PVPLIVGSSIGGLVLLALITAGLY) form a helical membrane-spanning segment. Residues 1130 to 1153 (KLGFFKRQYKDMMNEAAPQDAPPQ) lie on the Cytoplasmic side of the membrane. The GFFKR motif signature appears at 1132 to 1136 (GFFKR).

The protein belongs to the integrin alpha chain family. As to quaternary structure, heterodimer of an alpha and a beta subunit. ITGAM associates with ITGB2. Found in a complex with CD177 and ITGB2/CD18. Interacts with JAM3. Interacts with THBD. Interacts with complement factor H/CFH; this interaction mediates adhesion of neutrophils to pathogens leading to pathogen clearance. Interacts with TMEM268; this interaction inhibits ITGAM degradation via the endosome-lysosome pathway. In terms of tissue distribution, predominantly expressed in monocytes and granulocytes. Expressed in a subset of peritoneal mast cells. Expressed in microglia (at protein level).

It localises to the cell membrane. Its subcellular location is the membrane raft. In terms of biological role, integrin ITGAM/ITGB2 is implicated in various adhesive interactions of monocytes, macrophages and granulocytes as well as in mediating the uptake of complement-coated particles and pathogens. It is identical with CR-3, the receptor for the iC3b fragment of the third complement component. It probably recognizes the R-G-D peptide in C3b. Integrin ITGAM/ITGB2 is also a receptor for fibrinogen, factor X and ICAM1. It recognizes P1 and P2 peptides of fibrinogen gamma chain. Regulates neutrophil migration. In association with beta subunit ITGB2/CD18, required for CD177-PRTN3-mediated activation of TNF primed neutrophils. May regulate phagocytosis-induced apoptosis in extravasated neutrophils. May play a role in mast cell development. Required with TYROBP/DAP12 in microglia to control production of microglial superoxide ions which promote the neuronal apoptosis that occurs during brain development. The polypeptide is Integrin alpha-M (Itgam) (Mus musculus (Mouse)).